The sequence spans 369 residues: N-succinyl-L-Arg/Lys racemase (369 aa).

Residues Y26, D51, 161-163 (KMK), and 191-193 (DVN) contribute to the substrate site. D191, E218, and D243 together coordinate Mg(2+). Residues K267, 295–296 (SM), and 320–322 (ELT) contribute to the substrate site.

It belongs to the mandelate racemase/muconate lactonizing enzyme family. The cofactor is Mg(2+).

Its function is as follows. Catalyzes efficient racemization of N-succinyl-L-Arg and N-succinyl-L-Lys, suggesting that these are physiological substrates of this enzyme. Has low activity with L-Asp-L-Lys, and even lower activity with L-Leu-L-Arg, L-Leu-L-Lys, N-succinyl-L-His and N-succinyl-L-Met (in vitro). The chain is N-succinyl-L-Arg/Lys racemase from Bacillus cereus (strain ATCC 14579 / DSM 31 / CCUG 7414 / JCM 2152 / NBRC 15305 / NCIMB 9373 / NCTC 2599 / NRRL B-3711).